Consider the following 361-residue polypeptide: Molybdenum import ATP-binding protein ModC 1 (361 aa).

The ABC transporter domain occupies 1-237; that stretch reads MPADGIRARF…LDLPTAFHED (237 aa). Residue 35 to 42 coordinates ATP; sequence GHSGSGKT. In terms of domain architecture, Mop spans 296–361; the sequence is DSSITNVLPA…AQIKAVALLG (66 aa).

This sequence belongs to the ABC transporter superfamily. Molybdate importer (TC 3.A.1.8) family. In terms of assembly, the complex is composed of two ATP-binding proteins (ModC), two transmembrane proteins (ModB) and a solute-binding protein (ModA).

Its subcellular location is the cell inner membrane. It catalyses the reaction molybdate(out) + ATP + H2O = molybdate(in) + ADP + phosphate + H(+). In terms of biological role, part of the ABC transporter complex ModABC involved in molybdenum import. Responsible for energy coupling to the transport system. This is Molybdenum import ATP-binding protein ModC 1 from Azotobacter vinelandii.